The sequence spans 607 residues: Matrix metalloproteinase-16 (607 aa).

The N-terminal stretch at 1–31 is a signal peptide; it reads MILLAFSSGRRLDFVHRSGVFFLQTLLWILC. The propeptide occupies 32–119; that stretch reads ATVCGTEQYF…SSKFNIRRKR (88 aa). Residue asparagine 83 is glycosylated (N-linked (GlcNAc...) asparagine). Positions 99–106 match the Cysteine switch motif; that stretch reads PRCGVPDQ. Cysteine 101 serves as a coordination point for Zn(2+). Residues 120-564 are Extracellular-facing; the sequence is YALTGQKWQH…LDNTASTVKA (445 aa). Aspartate 183 contacts Ca(2+). 2 residues coordinate Zn(2+): histidine 193 and aspartate 195. Aspartate 200, glycine 201, glycine 203, and phenylalanine 205 together coordinate Ca(2+). Position 208 (histidine 208) interacts with Zn(2+). The Ca(2+) site is built by glycine 215, glycine 217, and aspartate 219. Histidine 221 is a Zn(2+) binding site. Aspartate 223 and glutamate 226 together coordinate Ca(2+). Residue histidine 246 participates in Zn(2+) binding. Residue glutamate 247 is part of the active site. The Zn(2+) site is built by histidine 250 and histidine 256. A disordered region spans residues 281–340; the sequence is DDLQGIQKIYGPPDKIPPPTRPLPTVPPHRSVPPADPRRHDRPKPPRPPTGRPSYPGAKP. Residues 294–315 are compositionally biased toward pro residues; it reads DKIPPPTRPLPTVPPHRSVPPA. 4 Hemopexin repeats span residues 340–388, 389–434, 436–484, and 485–532; these read PNIC…WRGL, PPSI…GNGI, PHGI…KGIP, and ESPQ…FMGC. Cysteine 343 and cysteine 532 form a disulfide bridge. Residues 565–585 form a helical membrane-spanning segment; the sequence is IAIVIPCILALCLLVLVYTVF. Residues 586-607 are Cytoplasmic-facing; the sequence is QFKRKGTPRHILYCKRSMQEWV.

The protein belongs to the peptidase M10A family. Interacts with CSPG4 through CSPG4 chondroitin sulfate glycosaminoglycan. It depends on Zn(2+) as a cofactor. Ca(2+) serves as cofactor. Post-translationally, the precursor is cleaved by a furin endopeptidase.

Its subcellular location is the cell membrane. Endopeptidase that degrades various components of the extracellular matrix, such as collagen type III and fibronectin. Activates progelatinase A. Involved in the matrix remodeling of blood vessels. It has no effect on type I, II, IV and V collagen. However, upon interaction with CSPG4, it may be involved in degradation and invasion of type I collagen by melanoma cells. The polypeptide is Matrix metalloproteinase-16 (Mmp16) (Mus musculus (Mouse)).